The following is a 433-amino-acid chain: Transcription factor TCP18 (433 aa).

Disordered regions lie at residues 130 to 163 (QRIS…GTRD) and 247 to 281 (DDRG…RTPI). Positions 148–206 (RTDRHSKIKTAKGTRDRRMRLSLDVAKELFGLQDMLGFDKASKTVEWLLTQAKPEIIKI) constitute a TCP domain. The region spanning 287–304 (KEERAKARERAKGRTMEK) is the R domain.

Expressed in unelongated axillary buds, and, to a lower extent, in axillary structures such as flowers and siliques.

It is found in the nucleus. In terms of biological role, transcription factor that prevents axillary bud outgrowth and delays early axillary bud development. Indirectly required for the auxin-induced control of apical dominance. This Arabidopsis thaliana (Mouse-ear cress) protein is Transcription factor TCP18.